A 417-amino-acid polypeptide reads, in one-letter code: UDP-N-acetylglucosamine 1-carboxyvinyltransferase (417 aa).

Residue 22 to 23 (KN) coordinates phosphoenolpyruvate. Arginine 93 is a UDP-N-acetyl-alpha-D-glucosamine binding site. Catalysis depends on cysteine 117, which acts as the Proton donor. A 2-(S-cysteinyl)pyruvic acid O-phosphothioketal modification is found at cysteine 117. Residues 122 to 126 (RPVDQ), aspartate 305, and isoleucine 327 each bind UDP-N-acetyl-alpha-D-glucosamine.

This sequence belongs to the EPSP synthase family. MurA subfamily.

The protein resides in the cytoplasm. The enzyme catalyses phosphoenolpyruvate + UDP-N-acetyl-alpha-D-glucosamine = UDP-N-acetyl-3-O-(1-carboxyvinyl)-alpha-D-glucosamine + phosphate. It participates in cell wall biogenesis; peptidoglycan biosynthesis. Functionally, cell wall formation. Adds enolpyruvyl to UDP-N-acetylglucosamine. The chain is UDP-N-acetylglucosamine 1-carboxyvinyltransferase from Dechloromonas aromatica (strain RCB).